The sequence spans 180 residues: Large ribosomal subunit protein uL5 (180 aa).

It belongs to the universal ribosomal protein uL5 family. Part of the 50S ribosomal subunit; part of the 5S rRNA/L5/L18/L25 subcomplex. Contacts the 5S rRNA and the P site tRNA. Forms a bridge to the 30S subunit in the 70S ribosome.

In terms of biological role, this is one of the proteins that bind and probably mediate the attachment of the 5S RNA into the large ribosomal subunit, where it forms part of the central protuberance. In the 70S ribosome it contacts protein S13 of the 30S subunit (bridge B1b), connecting the 2 subunits; this bridge is implicated in subunit movement. Contacts the P site tRNA; the 5S rRNA and some of its associated proteins might help stabilize positioning of ribosome-bound tRNAs. This Limosilactobacillus reuteri (strain DSM 20016) (Lactobacillus reuteri) protein is Large ribosomal subunit protein uL5.